A 249-amino-acid polypeptide reads, in one-letter code: Glucosamine-6-phosphate deaminase (249 aa).

Catalysis depends on D67, which acts as the Proton acceptor; for enolization step. The For ring-opening step role is filled by N136. The active-site Proton acceptor; for ring-opening step is H138. The active-site For ring-opening step is the E143.

It belongs to the glucosamine/galactosamine-6-phosphate isomerase family. NagB subfamily.

The enzyme catalyses alpha-D-glucosamine 6-phosphate + H2O = beta-D-fructose 6-phosphate + NH4(+). It functions in the pathway amino-sugar metabolism; N-acetylneuraminate degradation; D-fructose 6-phosphate from N-acetylneuraminate: step 5/5. Functionally, catalyzes the reversible isomerization-deamination of glucosamine 6-phosphate (GlcN6P) to form fructose 6-phosphate (Fru6P) and ammonium ion. The sequence is that of Glucosamine-6-phosphate deaminase from Clostridium botulinum (strain Eklund 17B / Type B).